Here is a 425-residue protein sequence, read N- to C-terminus: Actin-related protein 3 (425 aa).

This sequence belongs to the actin family. ARP3 subfamily. In terms of assembly, component of the Arp2/3 complex, at least composed of arx-1, arx-2, arx-4 and arx-6.

It localises to the cytoplasm. The protein resides in the cytoskeleton. In terms of biological role, functions as ATP-binding component of the Arp2/3 complex which is involved in regulation of actin polymerization and together with an activating nucleation-promoting factor (NPF) mediates the formation of branched actin networks. Seems to contact the pointed end of the daughter actin filament. Plays a role in time-dependent memory loss and the retention of conditioned behavior over time. The polypeptide is Actin-related protein 3 (Caenorhabditis elegans).